Reading from the N-terminus, the 220-residue chain is UPF0319 protein YccT (220 aa).

The signal sequence occupies residues 1 to 20 (MKTGALATFLALCLPVTVFA).

The protein belongs to the UPF0319 family.

The chain is UPF0319 protein YccT from Salmonella agona (strain SL483).